Consider the following 1482-residue polypeptide: Chromosome partition protein MukB (1482 aa).

Gly34–Ser41 contacts ATP. Residues Ala333 to Gln665 are a coiled coil. The tract at residues Pro666–Arg783 is flexible hinge. 2 coiled-coil regions span residues Glu784–Gly1116 and Val1209–Gln1260.

The protein belongs to the SMC family. MukB subfamily. As to quaternary structure, homodimerization via its hinge domain. Binds to DNA via its C-terminal region. Interacts, and probably forms a ternary complex, with MukE and MukF via its C-terminal region. The complex formation is stimulated by calcium or magnesium. Interacts with tubulin-related protein FtsZ.

It localises to the cytoplasm. The protein resides in the nucleoid. Functionally, plays a central role in chromosome condensation, segregation and cell cycle progression. Functions as a homodimer, which is essential for chromosome partition. Involved in negative DNA supercoiling in vivo, and by this means organize and compact chromosomes. May achieve or facilitate chromosome segregation by condensation DNA from both sides of a centrally located replisome during cell division. This chain is Chromosome partition protein MukB, found in Photorhabdus laumondii subsp. laumondii (strain DSM 15139 / CIP 105565 / TT01) (Photorhabdus luminescens subsp. laumondii).